Consider the following 1434-residue polypeptide: DNA-directed RNA polymerase subunit beta (1434 aa).

Belongs to the RNA polymerase beta chain family. As to quaternary structure, the RNAP catalytic core consists of 2 alpha, 1 beta, 1 beta' and 1 omega subunit. When a sigma factor is associated with the core the holoenzyme is formed, which can initiate transcription.

The catalysed reaction is RNA(n) + a ribonucleoside 5'-triphosphate = RNA(n+1) + diphosphate. DNA-dependent RNA polymerase catalyzes the transcription of DNA into RNA using the four ribonucleoside triphosphates as substrates. The protein is DNA-directed RNA polymerase subunit beta of Ureaplasma urealyticum serovar 10 (strain ATCC 33699 / Western).